A 467-amino-acid polypeptide reads, in one-letter code: uncharacterized protein (467 aa).

A disordered region spans residues 1–60 (MVRVSRGCQSCVDAKLQSTPSPSPSKSPSPTESPEQCLQKRQSGEQVVLPSRPFPRTSPR).

In terms of biological role, involved in osmoadaptation. This is an uncharacterized protein from Emericella nidulans (strain FGSC A4 / ATCC 38163 / CBS 112.46 / NRRL 194 / M139) (Aspergillus nidulans).